Consider the following 243-residue polypeptide: 1-(5-phosphoribosyl)-5-[(5-phosphoribosylamino)methylideneamino] imidazole-4-carboxamide isomerase (243 aa).

Residue Asp-10 is the Proton acceptor of the active site. The Proton donor role is filled by Asp-131.

The protein belongs to the HisA/HisF family.

It is found in the cytoplasm. It carries out the reaction 1-(5-phospho-beta-D-ribosyl)-5-[(5-phospho-beta-D-ribosylamino)methylideneamino]imidazole-4-carboxamide = 5-[(5-phospho-1-deoxy-D-ribulos-1-ylimino)methylamino]-1-(5-phospho-beta-D-ribosyl)imidazole-4-carboxamide. Its pathway is amino-acid biosynthesis; L-histidine biosynthesis; L-histidine from 5-phospho-alpha-D-ribose 1-diphosphate: step 4/9. The sequence is that of 1-(5-phosphoribosyl)-5-[(5-phosphoribosylamino)methylideneamino] imidazole-4-carboxamide isomerase from Rhizorhabdus wittichii (strain DSM 6014 / CCUG 31198 / JCM 15750 / NBRC 105917 / EY 4224 / RW1) (Sphingomonas wittichii).